A 441-amino-acid polypeptide reads, in one-letter code: Polyketide methyltransferase ustM (441 aa).

Residues 266-368 are methyltransferase (CMeT) domain; that stretch reads LEVGAGLGGT…VRKLLRGGGF (103 aa).

The protein belongs to the methyltransferase superfamily.

It participates in secondary metabolite biosynthesis. Its function is as follows. Polyketide methyltransferase; part of the gene cluster that mediates the biosynthesis of ustilaginoidins, dimeric gamma-naphthopyrones isolated from different fungal species. The first step in the biosynthesis of ustilaginoidins is the production of gamma-naphthopyrone precursor YWA1 by the non-reducing polyketide synthase ustP, via condensation of one acetyl-CoA starter unit with 6 malonyl-CoA units. YWA1 is then probably substrate of the ustZ to yield norrubrofusarin via a dehydration reaction. A key enzyme in the biosynthetic pathway is the laccase ustL, which catalyzes the oxidative dimerization of norrubrofusarin to ustilaginoidin A. It can produce the M- and P-atropisomers in varying amounts, depending on the reaction conditions. For the biosynthesis of 3-methylustilaginoid in derivatives such as chaetochromin A, a methylated derivative of YWA1 is required. The C-methylation is considered to be catalyzed by ustM, the phosphopantetheine attachment site of which indicates that it acts on the growing polyketide chain before release of the product. For the biosynthesis of chaetochromin A, it is assumed that saturation of the D2 double bond takes place before dimerization, and is probably catalyzed by an external reductase because no candidate gene was identified within the cluster. This is Polyketide methyltransferase ustM from Ustilaginoidea virens (Rice false smut fungus).